We begin with the raw amino-acid sequence, 622 residues long: 1,4-alpha-glucan branching enzyme GlgB (622 aa).

D306 (nucleophile) is an active-site residue. The active-site Proton donor is E358. The segment at 581-606 is disordered; that stretch reads YGGSNVGNRGAVHSDPVEKHGHSHSL.

It belongs to the glycosyl hydrolase 13 family. GlgB subfamily. As to quaternary structure, monomer.

The catalysed reaction is Transfers a segment of a (1-&gt;4)-alpha-D-glucan chain to a primary hydroxy group in a similar glucan chain.. Its pathway is glycan biosynthesis; glycogen biosynthesis. In terms of biological role, catalyzes the formation of the alpha-1,6-glucosidic linkages in glycogen by scission of a 1,4-alpha-linked oligosaccharide from growing alpha-1,4-glucan chains and the subsequent attachment of the oligosaccharide to the alpha-1,6 position. The chain is 1,4-alpha-glucan branching enzyme GlgB from Salinibacter ruber (strain DSM 13855 / M31).